The primary structure comprises 368 residues: Forkhead box protein I2 (368 aa).

Positions 33-54 (QNQQLPQRPAAPPALGYGRNEY) are disordered. A DNA-binding region (fork-head) is located at residues 124 to 218 (RPPYSYSSLI…DNGNFRRKRK (95 aa)). The tract at residues 243 to 272 (SLGSDSPRGASALEQSSYGTPESKSRPAGG) is disordered. A compositionally biased stretch (polar residues) spans 255 to 264 (LEQSSYGTPE).

The protein localises to the nucleus. In terms of biological role, possible transcriptional activator. In Xenopus tropicalis (Western clawed frog), this protein is Forkhead box protein I2.